Reading from the N-terminus, the 258-residue chain is Phosphoadenosine 5'-phosphosulfate reductase (258 aa).

Catalysis depends on cysteine 244, which acts as the Nucleophile; cysteine thiosulfonate intermediate.

Belongs to the PAPS reductase family. CysH subfamily.

The protein localises to the cytoplasm. The catalysed reaction is [thioredoxin]-disulfide + sulfite + adenosine 3',5'-bisphosphate + 2 H(+) = [thioredoxin]-dithiol + 3'-phosphoadenylyl sulfate. Its pathway is sulfur metabolism; hydrogen sulfide biosynthesis; sulfite from sulfate: step 3/3. Functionally, catalyzes the formation of sulfite from phosphoadenosine 5'-phosphosulfate (PAPS) using thioredoxin as an electron donor. This Vibrio vulnificus (strain YJ016) protein is Phosphoadenosine 5'-phosphosulfate reductase.